The primary structure comprises 267 residues: 2-keto-3-deoxy-L-rhamnonate aldolase (267 aa).

His-49 serves as the catalytic Proton acceptor. Position 151 (Gln-151) interacts with substrate. Residue Glu-153 coordinates Mg(2+). Substrate contacts are provided by Ala-178 and Asp-179. Mg(2+) is bound at residue Asp-179.

This sequence belongs to the HpcH/HpaI aldolase family. KDR aldolase subfamily. As to quaternary structure, homohexamer. Mg(2+) is required as a cofactor.

It catalyses the reaction 2-dehydro-3-deoxy-L-rhamnonate = (S)-lactaldehyde + pyruvate. Catalyzes the reversible retro-aldol cleavage of 2-keto-3-deoxy-L-rhamnonate (KDR) to pyruvate and lactaldehyde. This is 2-keto-3-deoxy-L-rhamnonate aldolase from Escherichia coli O6:K15:H31 (strain 536 / UPEC).